The primary structure comprises 33 residues: Toxin BcV (33 aa).

A disulfide bond links Cys-6 and Cys-30.

It localises to the secreted. Its subcellular location is the nematocyst. Its function is as follows. Potently and reversibly blocks mammalian Kv11/KCNH/ERG voltage-gated potassium channels. Acts as a gating-modifier toxin that shifts the voltage-dependence of ERG activation in the positive direction and suppresses its current amplitudes elicited by strong depolarizing pulses that maximally activate the channels. The chain is Toxin BcV from Bunodosoma caissarum (Sea anemone).